The chain runs to 269 residues: Bis(5'-nucleosyl)-tetraphosphatase, symmetrical (269 aa).

This sequence belongs to the Ap4A hydrolase family.

It carries out the reaction P(1),P(4)-bis(5'-adenosyl) tetraphosphate + H2O = 2 ADP + 2 H(+). Its function is as follows. Hydrolyzes diadenosine 5',5'''-P1,P4-tetraphosphate to yield ADP. In Vibrio vulnificus (strain CMCP6), this protein is Bis(5'-nucleosyl)-tetraphosphatase, symmetrical.